Consider the following 123-residue polypeptide: Large ribosomal subunit protein uL14c (123 aa).

This sequence belongs to the universal ribosomal protein uL14 family. As to quaternary structure, part of the 50S ribosomal subunit.

It is found in the plastid. The protein resides in the chloroplast. Its function is as follows. Binds to 23S rRNA. This Sorghum bicolor (Sorghum) protein is Large ribosomal subunit protein uL14c.